We begin with the raw amino-acid sequence, 520 residues long: Cobyric acid synthase (520 aa).

One can recognise a GATase cobBQ-type domain in the interval 257–451; sequence WLTVAAVRLP…VHGLLESDGF (195 aa). Catalysis depends on C338, which acts as the Nucleophile. H443 is a catalytic residue.

This sequence belongs to the CobB/CobQ family. CobQ subfamily.

Its pathway is cofactor biosynthesis; adenosylcobalamin biosynthesis. Catalyzes amidations at positions B, D, E, and G on adenosylcobyrinic A,C-diamide. NH(2) groups are provided by glutamine, and one molecule of ATP is hydrogenolyzed for each amidation. The polypeptide is Cobyric acid synthase (Nocardia farcinica (strain IFM 10152)).